The chain runs to 808 residues: Homeobox-leucine zipper protein HDG1 (808 aa).

A disordered region spans residues 57-121 (LQTNGEMSRN…KRYHRHTPKQ (65 aa)). Basic and acidic residues predominate over residues 79 to 90 (SRGEDVESRSES). Over residues 108–119 (LKKKKRYHRHTP) the composition is skewed to basic residues. The segment at residues 110-169 (KKKRYHRHTPKQIQDLESVFKECAHPDEKQRLDLSRRLNLDPRQVKFWFQNRRTQMKTQI) is a DNA-binding region (homeobox). A coiled-coil region spans residues 158 to 233 (FQNRRTQMKT…SRLKDELDRV (76 aa)). In terms of domain architecture, START spans 310–541 (DFDQRSRYLD…LQRQCECLTI (232 aa)).

The protein belongs to the HD-ZIP homeobox family. Class IV subfamily. In terms of assembly, interacts with CFL1. Binds with BBM. In terms of tissue distribution, expressed in trichomes forming at the base of young leaves, in endodermal cell lines around emergent lateral roots and in the epidermal layer of the stamen filament.

The protein resides in the nucleus. Its function is as follows. Probable transcription factor. Promotes cuticle development probably by modulating the expression of the downstream genes BDG and FDH, possibly repressed in a CFL1-dependent manner. Involved, together with PDF2, in the regulation of flower organs development by promoting the expression of APETALA 3 (AP3) in the epidermis and internal cell layers of developing flowers. In opposition to BBM, seems to promote cell differentiation and giant cell identity via transcriptional repression of meristem and cell proliferation genes. In Arabidopsis thaliana (Mouse-ear cress), this protein is Homeobox-leucine zipper protein HDG1.